The chain runs to 132 residues: Small ribosomal subunit protein uS8 (132 aa).

This sequence belongs to the universal ribosomal protein uS8 family. As to quaternary structure, part of the 30S ribosomal subunit. Contacts proteins S5 and S12.

In terms of biological role, one of the primary rRNA binding proteins, it binds directly to 16S rRNA central domain where it helps coordinate assembly of the platform of the 30S subunit. In Corynebacterium kroppenstedtii (strain DSM 44385 / JCM 11950 / CIP 105744 / CCUG 35717), this protein is Small ribosomal subunit protein uS8.